Consider the following 215-residue polypeptide: Octanoyltransferase (215 aa).

Residues 31–206 (TDAPDEVWLV…QLVKHLDYAE (176 aa)) form the BPL/LPL catalytic domain. Substrate-binding positions include 70 to 77 (RGGQVTYH), 137 to 139 (SLG), and 150 to 152 (GLA). C168 functions as the Acyl-thioester intermediate in the catalytic mechanism.

Belongs to the LipB family.

The protein resides in the cytoplasm. The enzyme catalyses octanoyl-[ACP] + L-lysyl-[protein] = N(6)-octanoyl-L-lysyl-[protein] + holo-[ACP] + H(+). It participates in protein modification; protein lipoylation via endogenous pathway; protein N(6)-(lipoyl)lysine from octanoyl-[acyl-carrier-protein]: step 1/2. In terms of biological role, catalyzes the transfer of endogenously produced octanoic acid from octanoyl-acyl-carrier-protein onto the lipoyl domains of lipoate-dependent enzymes. Lipoyl-ACP can also act as a substrate although octanoyl-ACP is likely to be the physiological substrate. This chain is Octanoyltransferase, found in Pseudomonas fluorescens (strain ATCC BAA-477 / NRRL B-23932 / Pf-5).